Reading from the N-terminus, the 291-residue chain is Probable L-ascorbate peroxidase 3, peroxisomal (291 aa).

The active-site Proton acceptor is His41. The segment at 114–133 (YVPGRRDSSDSPEEGRLPDA) is disordered. Residues 116-133 (PGRRDSSDSPEEGRLPDA) show a composition bias toward basic and acidic residues. Position 161 (His161) interacts with heme b. K(+) is bound by residues Thr162, Thr178, and Asp185. Residues 263–283 (LLMQTAAGVAVAAAVVAWAYL) traverse the membrane as a helical segment.

It belongs to the peroxidase family. Ascorbate peroxidase subfamily. The cofactor is heme b. In terms of tissue distribution, expressed in stems.

It is found in the peroxisome membrane. The catalysed reaction is L-ascorbate + H2O2 = L-dehydroascorbate + 2 H2O. In terms of biological role, plays a key role in hydrogen peroxide removal. The protein is Probable L-ascorbate peroxidase 3, peroxisomal of Oryza sativa subsp. japonica (Rice).